Consider the following 158-residue polypeptide: Ribosome-binding factor A (158 aa).

Residues 127–158 (RQGAVHAGDADPYKESAAEEPAAYEDDERRPD) form a disordered region. Over residues 134-143 (GDADPYKESA) the composition is skewed to basic and acidic residues.

The protein belongs to the RbfA family. Monomer. Binds 30S ribosomal subunits, but not 50S ribosomal subunits or 70S ribosomes.

It is found in the cytoplasm. Its function is as follows. One of several proteins that assist in the late maturation steps of the functional core of the 30S ribosomal subunit. Associates with free 30S ribosomal subunits (but not with 30S subunits that are part of 70S ribosomes or polysomes). Required for efficient processing of 16S rRNA. May interact with the 5'-terminal helix region of 16S rRNA. This Mycobacteroides abscessus (strain ATCC 19977 / DSM 44196 / CCUG 20993 / CIP 104536 / JCM 13569 / NCTC 13031 / TMC 1543 / L948) (Mycobacterium abscessus) protein is Ribosome-binding factor A.